We begin with the raw amino-acid sequence, 194 residues long: Ribonuclease HII (194 aa).

Residues 3–193 (ILTAGVDEAG…VRNLLAQQAL (191 aa)) form the RNase H type-2 domain. A divalent metal cation is bound by residues Asp-9, Glu-10, and Asp-101.

It belongs to the RNase HII family. The cofactor is Mn(2+). Mg(2+) serves as cofactor.

It localises to the cytoplasm. The enzyme catalyses Endonucleolytic cleavage to 5'-phosphomonoester.. Endonuclease that specifically degrades the RNA of RNA-DNA hybrids. In Neisseria meningitidis serogroup A / serotype 4A (strain DSM 15465 / Z2491), this protein is Ribonuclease HII (rnhB).